The following is a 77-amino-acid chain: MLSKDKLDRINVLSKKSKEEGLTTEEKAEQKKLREEYLKNVRSSFKNQLSTVTVLDPEGKDVTPQKLRDYQDRNKKH.

Residues 56-77 (DPEGKDVTPQKLRDYQDRNKKH) form a disordered region. Over residues 57–77 (PEGKDVTPQKLRDYQDRNKKH) the composition is skewed to basic and acidic residues.

It belongs to the UPF0291 family.

It localises to the cytoplasm. This chain is UPF0291 protein OB1671, found in Oceanobacillus iheyensis (strain DSM 14371 / CIP 107618 / JCM 11309 / KCTC 3954 / HTE831).